Here is a 1407-residue protein sequence, read N- to C-terminus: DNA-directed RNA polymerase subunit beta' (1407 aa).

Cys70, Cys72, Cys85, and Cys88 together coordinate Zn(2+). The Mg(2+) site is built by Asp460, Asp462, and Asp464. Zn(2+)-binding residues include Cys814, Cys888, Cys895, and Cys898.

The protein belongs to the RNA polymerase beta' chain family. In terms of assembly, the RNAP catalytic core consists of 2 alpha, 1 beta, 1 beta' and 1 omega subunit. When a sigma factor is associated with the core the holoenzyme is formed, which can initiate transcription. It depends on Mg(2+) as a cofactor. The cofactor is Zn(2+).

It catalyses the reaction RNA(n) + a ribonucleoside 5'-triphosphate = RNA(n+1) + diphosphate. DNA-dependent RNA polymerase catalyzes the transcription of DNA into RNA using the four ribonucleoside triphosphates as substrates. The polypeptide is DNA-directed RNA polymerase subunit beta' (Buchnera aphidicola subsp. Acyrthosiphon pisum (strain APS) (Acyrthosiphon pisum symbiotic bacterium)).